The chain runs to 163 residues: Probable calcium-binding protein CML26 (163 aa).

Position 2 is an N-acetylalanine (alanine 2). EF-hand domains lie at 16–51 (STDMELKKVFDKFDANGDGKISVSELGNVFKSMGTS), 52–82 (YTEEELNRVLDEIDIDCDGFINQEEFATICR), 85–120 (SSAVEIREAFDLYDQNKNGLISSSEIHKVLNRLGMT), and 121–156 (CSVEDCVRMIGHVDTDGDGNVNFEEFQKMMSSPELV). Residues aspartate 29, asparagine 31, aspartate 33, lysine 35, glutamate 40, aspartate 65, aspartate 67, aspartate 69, glutamate 76, aspartate 98, asparagine 100, asparagine 102, glutamate 109, aspartate 134, aspartate 136, aspartate 138, asparagine 140, and glutamate 145 each coordinate Ca(2+).

In terms of biological role, potential calcium sensor. This is Probable calcium-binding protein CML26 (CML26) from Arabidopsis thaliana (Mouse-ear cress).